A 254-amino-acid chain; its full sequence is 5-oxoprolinase subunit A (254 aa).

It belongs to the LamB/PxpA family. Forms a complex composed of PxpA, PxpB and PxpC.

It carries out the reaction 5-oxo-L-proline + ATP + 2 H2O = L-glutamate + ADP + phosphate + H(+). Functionally, catalyzes the cleavage of 5-oxoproline to form L-glutamate coupled to the hydrolysis of ATP to ADP and inorganic phosphate. This is 5-oxoprolinase subunit A from Rhodopseudomonas palustris (strain ATCC BAA-98 / CGA009).